A 249-amino-acid polypeptide reads, in one-letter code: ATP synthase subunit a (249 aa).

6 helical membrane passes run 30 to 50, 84 to 104, 114 to 134, 143 to 163, 196 to 216, and 221 to 241; these read SAYMLVAVAVISLLMIGGVAG, FFPLVFSLFMFIMISNMVGII, LIVTAALALLVFLTVLIYGFY, IFVPSGVPVFILPLVVFIEVF, LLAGLGIAGYFGAVLPLGMVI, and LELLVAFLQAYVFAILTCIYL.

The protein belongs to the ATPase A chain family. F-type ATPases have 2 components, CF(1) - the catalytic core - and CF(0) - the membrane proton channel. CF(1) has five subunits: alpha(3), beta(3), gamma(1), delta(1), epsilon(1). CF(0) has four main subunits: a, b, b' and c.

It localises to the cell inner membrane. Key component of the proton channel; it plays a direct role in the translocation of protons across the membrane. The chain is ATP synthase subunit a from Rhodopseudomonas palustris (strain BisB18).